The chain runs to 415 residues: G2/mitotic-specific cyclin cig1 (415 aa).

2 disordered regions span residues 54–74 and 86–118; these read PTLI…DTFE and EERS…ILTH. Over residues 57-71 the composition is skewed to low complexity; that stretch reads IEGNNESSISSSTGD. Serine 96 carries the post-translational modification Phosphoserine.

It belongs to the cyclin family. Cyclin G subfamily.

In terms of biological role, required for efficient passage of the G1/S transition. The polypeptide is G2/mitotic-specific cyclin cig1 (cig1) (Schizosaccharomyces pombe (strain 972 / ATCC 24843) (Fission yeast)).